Here is a 701-residue protein sequence, read N- to C-terminus: Larval serum protein 2 (701 aa).

An N-terminal signal peptide occupies residues 1–21 (MKSFTVIALAAVALLATLGQA). N-linked (GlcNAc...) asparagine glycosylation occurs at Asn204.

Belongs to the hemocyanin family. Homohexamer.

The protein resides in the secreted. It localises to the extracellular space. Functionally, larval storage protein (LSP) which may serve as a store of amino acids for synthesis of adult proteins. The protein is Larval serum protein 2 (Lsp2) of Drosophila melanogaster (Fruit fly).